A 270-amino-acid polypeptide reads, in one-letter code: MDNKIVYVVSDSVGETADLVVRAAMGQFPFAPDIRRVPYVEDTGTLKEVISIAKSNQALICFTLVKPDMRQYLLTEAAKEGVEAYDIIGPLIDQIEEITGQVPRYEPGVVRRLDEEYFKKIEAIEFAVKYDDGRDARGILKADIVLIGISRTSKTPLSQYLAHNKRLKVANVPLVPEVDPPEELYQVAKEKCFGLKIIPDKLNHIRKERLKSLGLSDGATYANINRIQEEIDHFEEVISKINCQVIDVSNKAIEETANIIVNAVQNQKMF.

ADP is bound at residue glycine 148–threonine 155.

This sequence belongs to the pyruvate, phosphate/water dikinase regulatory protein family. PDRP subfamily.

It catalyses the reaction N(tele)-phospho-L-histidyl/L-threonyl-[pyruvate, phosphate dikinase] + ADP = N(tele)-phospho-L-histidyl/O-phospho-L-threonyl-[pyruvate, phosphate dikinase] + AMP + H(+). The catalysed reaction is N(tele)-phospho-L-histidyl/O-phospho-L-threonyl-[pyruvate, phosphate dikinase] + phosphate + H(+) = N(tele)-phospho-L-histidyl/L-threonyl-[pyruvate, phosphate dikinase] + diphosphate. Functionally, bifunctional serine/threonine kinase and phosphorylase involved in the regulation of the pyruvate, phosphate dikinase (PPDK) by catalyzing its phosphorylation/dephosphorylation. This Bacillus mycoides (strain KBAB4) (Bacillus weihenstephanensis) protein is Putative pyruvate, phosphate dikinase regulatory protein.